A 113-amino-acid chain; its full sequence is Protein PucD (113 aa).

In terms of biological role, seems to be required for the LH-II stabilization. The polypeptide is Protein PucD (pucD) (Rhodobacter capsulatus (Rhodopseudomonas capsulata)).